The primary structure comprises 387 residues: Succinate--CoA ligase [ADP-forming] subunit beta (387 aa).

Residues 9–244 form the ATP-grasp domain; the sequence is KALLQRYGVN…WSQDDAKEAE (236 aa). ATP contacts are provided by residues K46, 53-55, E99, L102, and E107; that span reads GRG. The Mg(2+) site is built by N199 and D213. Substrate is bound by residues N264 and 321-323; that span reads GIM.

The protein belongs to the succinate/malate CoA ligase beta subunit family. Heterotetramer of two alpha and two beta subunits. It depends on Mg(2+) as a cofactor.

It catalyses the reaction succinate + ATP + CoA = succinyl-CoA + ADP + phosphate. The catalysed reaction is GTP + succinate + CoA = succinyl-CoA + GDP + phosphate. It participates in carbohydrate metabolism; tricarboxylic acid cycle; succinate from succinyl-CoA (ligase route): step 1/1. Succinyl-CoA synthetase functions in the citric acid cycle (TCA), coupling the hydrolysis of succinyl-CoA to the synthesis of either ATP or GTP and thus represents the only step of substrate-level phosphorylation in the TCA. The beta subunit provides nucleotide specificity of the enzyme and binds the substrate succinate, while the binding sites for coenzyme A and phosphate are found in the alpha subunit. The polypeptide is Succinate--CoA ligase [ADP-forming] subunit beta (Methylobacillus flagellatus (strain ATCC 51484 / DSM 6875 / VKM B-1610 / KT)).